Here is a 113-residue protein sequence, read N- to C-terminus: Cytochrome c oxidase subunit 7A2-like, mitochondrial (113 aa).

Residues 1–54 (MYYKFSSFTQKLAGAWASEAYTPQGLKPVSTEAPPIIFATPTKLTSSVTAYDYS) constitute a mitochondrion transit peptide. The residue at position 68 (K68) is an N6-acetyllysine. Residues 81–106 (PDQMLYRTTMALTLGGTIYCLIALYM) form a helical membrane-spanning segment.

The protein belongs to the cytochrome c oxidase VIIa family. In terms of assembly, interacts with the mitochondrial respiratory complexes III (CIII) and IV (CIV), promoting their association.

The protein localises to the mitochondrion inner membrane. It participates in energy metabolism; oxidative phosphorylation. Assembly factor that mediates the formation of some mitochondrial respiratory supercomplexes (respirasomes), thereby promoting oxidative phosphorylation and energy metabolism. Acts as a molecular adapter that associates with both mitochondrial respiratory complexes III (CIII) and IV (CIV), promoting their association. Mediates the formation of various mitochondrial respiratory supercomplexes, such as MCIII(2)IV(2), composed of two CIII and two CIV, and the CS-respirasome (MCI(1)III(2)IV(2)), composed of one CI, two CIII and two CIV. Not involved in the formation of the canonical respirasome (MCI(1)III(2)IV(1)), composed of one CI, two CIII and one CIV. The formation of different respirasomes is important for cell adaptation to oxygen conditions and prevent metabolic exhaustion: supercomplexes mediated by COX7A2L/SCAF1 are required to maintain oxidative phosphorylation upon low oxygen conditions and promote metabolic rewiring toward glycolysis. The polypeptide is Cytochrome c oxidase subunit 7A2-like, mitochondrial (Mus musculus (Mouse)).